A 385-amino-acid chain; its full sequence is Multidrug resistance protein MdtE (385 aa).

The N-terminal stretch at 1–20 (MNRRRKLLIPLLFCGAMLTA) is a signal peptide. The N-palmitoyl cysteine moiety is linked to residue C21. A lipid anchor (S-diacylglycerol cysteine) is attached at C21.

Belongs to the membrane fusion protein (MFP) (TC 8.A.1) family. Homotrimer. Part of the tripartite efflux system MdtEF-TolC, which is composed of an inner membrane transporter, MdtF, a membrane fusion protein, MdtE, and an outer membrane component, TolC. The complex forms a large protein conduit and can translocate molecules across both the inner and outer membranes.

It localises to the cell inner membrane. Part of the tripartite efflux system MdtEF-TolC, which confers resistance to compounds such as rhodamine 6G, erythromycin, doxorubicin, ethidium bromide, TPP, SDS, deoxycholate, crystal violet and benzalkonium. This is Multidrug resistance protein MdtE (mdtE) from Escherichia coli (strain K12).